Here is a 289-residue protein sequence, read N- to C-terminus: ATP synthase subunit a (289 aa).

Transmembrane regions (helical) follow at residues 43–63 (AFHV…VLIF), 101–121 (SAVI…MNAV), 160–180 (LSVF…GGFI), 193–213 (LFVQ…TLIA), 232–252 (VFIL…GLGV), and 259–279 (AVFH…LTIV).

The protein belongs to the ATPase A chain family. F-type ATPases have 2 components, CF(1) - the catalytic core - and CF(0) - the membrane proton channel. CF(1) has five subunits: alpha(3), beta(3), gamma(1), delta(1), epsilon(1). CF(0) has three main subunits: a(1), b(2) and c(9-12). The alpha and beta chains form an alternating ring which encloses part of the gamma chain. CF(1) is attached to CF(0) by a central stalk formed by the gamma and epsilon chains, while a peripheral stalk is formed by the delta and b chains.

Its subcellular location is the cell inner membrane. Key component of the proton channel; it plays a direct role in the translocation of protons across the membrane. The chain is ATP synthase subunit a from Pseudomonas savastanoi pv. phaseolicola (strain 1448A / Race 6) (Pseudomonas syringae pv. phaseolicola (strain 1448A / Race 6)).